The primary structure comprises 334 residues: Tryptophan--tRNA ligase (334 aa).

ATP is bound by residues 12–14 (QPS) and 20–21 (GN). The 'HIGH' region motif lies at 13–21 (PSGIPTLGN). L-tryptophan is bound at residue aspartate 136. Residues 148–150 (GKD), isoleucine 187, and 196–200 (KMSKS) contribute to the ATP site. Positions 196-200 (KMSKS) match the 'KMSKS' region motif.

This sequence belongs to the class-I aminoacyl-tRNA synthetase family. Homodimer.

The protein localises to the cytoplasm. The catalysed reaction is tRNA(Trp) + L-tryptophan + ATP = L-tryptophyl-tRNA(Trp) + AMP + diphosphate + H(+). In terms of biological role, catalyzes the attachment of tryptophan to tRNA(Trp). The protein is Tryptophan--tRNA ligase of Wigglesworthia glossinidia brevipalpis.